A 559-amino-acid polypeptide reads, in one-letter code: (-)-drimenol synthase (559 aa).

Positions 311, 315, 456, 460, and 464 each coordinate Mg(2+). The DDXXD motif motif lies at 311–315 (DDIYD).

This sequence belongs to the terpene synthase family. Mg(2+) is required as a cofactor.

The catalysed reaction is (2E,6E)-farnesyl diphosphate + H2O = (5S,9S,10S)-drim-7-en-11-ol + diphosphate. The protein operates within secondary metabolite biosynthesis; terpenoid biosynthesis. Its function is as follows. Catalyzes the conversion of (2E,6E)-farnesyl diphosphate (FPP) into drimenol, a precursor of the sesquiterpenoid polygodial. Polygodial has been shown to be an antifeedant for a number of herbivorous insects. The polypeptide is (-)-drimenol synthase (Persicaria hydropiper (Marshpepper knotweed)).